We begin with the raw amino-acid sequence, 187 residues long: 1,6-anhydro-N-acetylmuramyl-L-alanine amidase AmpD (187 aa).

Residues 29-167 form the N-acetylmuramoyl-L-alanine amidase domain; that stretch reads SLLVVHNISL…APDRKTDPGP (139 aa). His-34 is a binding site for Zn(2+). Residue Glu-116 is the Proton acceptor of the active site. His-154 and Asp-164 together coordinate Zn(2+).

The protein belongs to the N-acetylmuramoyl-L-alanine amidase 2 family. Zn(2+) is required as a cofactor.

The protein localises to the cytoplasm. It carries out the reaction Hydrolyzes the link between N-acetylmuramoyl residues and L-amino acid residues in certain cell-wall glycopeptides.. Its function is as follows. Involved in cell wall peptidoglycan recycling. Specifically cleaves the amide bond between the lactyl group of N-acetylmuramic acid and the alpha-amino group of the L-alanine in degradation products containing an anhydro N-acetylmuramyl moiety. This chain is 1,6-anhydro-N-acetylmuramyl-L-alanine amidase AmpD (ampD), found in Salmonella typhimurium (strain SL1344).